A 129-amino-acid chain; its full sequence is uncharacterized protein (129 aa).

The tract at residues 23–101 (KASTSSESCQ…TAATRTTSKK (79 aa)) is disordered. Basic and acidic residues-rich tracts occupy residues 31–40 (CQRRGVRDDT) and 67–80 (EGDR…EKEP).

This is an uncharacterized protein from Ictaluridae (bullhead catfishes).